We begin with the raw amino-acid sequence, 308 residues long: Nodulation protein D 1 (308 aa).

Residues 6-63 (LDLNLLVALDALMTERNLTAAARSINLSQPAMSAAVGRLRVYFEDELFTMNGRELVLT) form the HTH lysR-type domain. Positions 23–42 (LTAAARSINLSQPAMSAAVG) form a DNA-binding region, H-T-H motif.

This sequence belongs to the LysR transcriptional regulatory family.

Functionally, nodD regulates the expression of the nodABCFE genes which encode other nodulation proteins. NodD is also a negative regulator of its own expression. Binds flavonoids as inducers. This is Nodulation protein D 1 (nodD1) from Rhizobium tropici.